Reading from the N-terminus, the 361-residue chain is Phosphoserine aminotransferase (361 aa).

R42 is a binding site for L-glutamate. Pyridoxal 5'-phosphate contacts are provided by residues 76-77, W102, T152, D172, and Q195; that span reads AT. K196 carries the N6-(pyridoxal phosphate)lysine modification. Residue 237–238 coordinates pyridoxal 5'-phosphate; the sequence is NT.

It belongs to the class-V pyridoxal-phosphate-dependent aminotransferase family. SerC subfamily. As to quaternary structure, homodimer. Pyridoxal 5'-phosphate serves as cofactor.

Its subcellular location is the cytoplasm. It carries out the reaction O-phospho-L-serine + 2-oxoglutarate = 3-phosphooxypyruvate + L-glutamate. It catalyses the reaction 4-(phosphooxy)-L-threonine + 2-oxoglutarate = (R)-3-hydroxy-2-oxo-4-phosphooxybutanoate + L-glutamate. It functions in the pathway amino-acid biosynthesis; L-serine biosynthesis; L-serine from 3-phospho-D-glycerate: step 2/3. The protein operates within cofactor biosynthesis; pyridoxine 5'-phosphate biosynthesis; pyridoxine 5'-phosphate from D-erythrose 4-phosphate: step 3/5. Its function is as follows. Catalyzes the reversible conversion of 3-phosphohydroxypyruvate to phosphoserine and of 3-hydroxy-2-oxo-4-phosphonooxybutanoate to phosphohydroxythreonine. This chain is Phosphoserine aminotransferase, found in Xanthomonas axonopodis pv. citri (strain 306).